We begin with the raw amino-acid sequence, 193 residues long: Large ribosomal subunit protein uL5 (193 aa).

Belongs to the universal ribosomal protein uL5 family. As to quaternary structure, part of the 50S ribosomal subunit; part of the 5S rRNA/L5/L18/L25 subcomplex. Contacts the 5S rRNA and the P site tRNA. Forms a bridge to the 30S subunit in the 70S ribosome.

Functionally, this is one of the proteins that bind and probably mediate the attachment of the 5S RNA into the large ribosomal subunit, where it forms part of the central protuberance. In the 70S ribosome it contacts protein S13 of the 30S subunit (bridge B1b), connecting the 2 subunits; this bridge is implicated in subunit movement. Contacts the P site tRNA; the 5S rRNA and some of its associated proteins might help stabilize positioning of ribosome-bound tRNAs. In Rhizorhabdus wittichii (strain DSM 6014 / CCUG 31198 / JCM 15750 / NBRC 105917 / EY 4224 / RW1) (Sphingomonas wittichii), this protein is Large ribosomal subunit protein uL5.